A 195-amino-acid polypeptide reads, in one-letter code: Adenylate kinase (195 aa).

Residue 10–15 (GSGKGT) coordinates ATP. The NMP stretch occupies residues 30-59 (STGDILRAERAAGTLLGQQAQSYMDRGELV). AMP-binding positions include Thr31, Arg36, 57 to 59 (ELV), 85 to 88 (GFPR), and Gln92. Positions 126–140 (NRAKQAVNGQQRSDD) are LID. Arg127 contacts ATP. Positions 137 and 148 each coordinate AMP. Arg176 provides a ligand contact to ATP.

The protein belongs to the adenylate kinase family. As to quaternary structure, monomer.

Its subcellular location is the cytoplasm. The enzyme catalyses AMP + ATP = 2 ADP. The protein operates within purine metabolism; AMP biosynthesis via salvage pathway; AMP from ADP: step 1/1. Its function is as follows. Catalyzes the reversible transfer of the terminal phosphate group between ATP and AMP. Plays an important role in cellular energy homeostasis and in adenine nucleotide metabolism. The sequence is that of Adenylate kinase from Thermosynechococcus vestitus (strain NIES-2133 / IAM M-273 / BP-1).